Consider the following 384-residue polypeptide: Queuine tRNA-ribosyltransferase (384 aa).

Catalysis depends on Asp93, which acts as the Proton acceptor. Residues 93 to 97, Asp147, Gln202, and Gly229 each bind substrate; that span reads DSGGF. The RNA binding stretch occupies residues 260–266; it reads GVGYPEE. Asp279 functions as the Nucleophile in the catalytic mechanism. The segment at 284 to 288 is RNA binding; important for wobble base 34 recognition; it reads TRAAR. The Zn(2+) site is built by Cys317, Cys319, Cys322, and His348.

It belongs to the queuine tRNA-ribosyltransferase family. In terms of assembly, homodimer. Within each dimer, one monomer is responsible for RNA recognition and catalysis, while the other monomer binds to the replacement base PreQ1. Requires Zn(2+) as cofactor.

It carries out the reaction 7-aminomethyl-7-carbaguanine + guanosine(34) in tRNA = 7-aminomethyl-7-carbaguanosine(34) in tRNA + guanine. It functions in the pathway tRNA modification; tRNA-queuosine biosynthesis. Functionally, catalyzes the base-exchange of a guanine (G) residue with the queuine precursor 7-aminomethyl-7-deazaguanine (PreQ1) at position 34 (anticodon wobble position) in tRNAs with GU(N) anticodons (tRNA-Asp, -Asn, -His and -Tyr). Catalysis occurs through a double-displacement mechanism. The nucleophile active site attacks the C1' of nucleotide 34 to detach the guanine base from the RNA, forming a covalent enzyme-RNA intermediate. The proton acceptor active site deprotonates the incoming PreQ1, allowing a nucleophilic attack on the C1' of the ribose to form the product. After dissociation, two additional enzymatic reactions on the tRNA convert PreQ1 to queuine (Q), resulting in the hypermodified nucleoside queuosine (7-(((4,5-cis-dihydroxy-2-cyclopenten-1-yl)amino)methyl)-7-deazaguanosine). This Koribacter versatilis (strain Ellin345) protein is Queuine tRNA-ribosyltransferase.